Reading from the N-terminus, the 558-residue chain is Chaperonin GroEL 1 (558 aa).

ATP contacts are provided by residues 29-32, 86-90, glycine 413, and aspartate 494; these read TLGP and DGTTT.

The protein belongs to the chaperonin (HSP60) family. As to quaternary structure, forms a cylinder of 14 subunits composed of two heptameric rings stacked back-to-back. Interacts with the co-chaperonin GroES.

The protein localises to the cytoplasm. The enzyme catalyses ATP + H2O + a folded polypeptide = ADP + phosphate + an unfolded polypeptide.. Its function is as follows. Together with its co-chaperonin GroES, plays an essential role in assisting protein folding. The GroEL-GroES system forms a nano-cage that allows encapsulation of the non-native substrate proteins and provides a physical environment optimized to promote and accelerate protein folding. In Acaryochloris marina (strain MBIC 11017), this protein is Chaperonin GroEL 1.